Reading from the N-terminus, the 832-residue chain is Thymine dioxygenase JBP1-A (832 aa).

The segment covering 1–12 (MKQKRGKQDVKM) has biased composition (basic and acidic residues). The interval 1-24 (MKQKRGKQDVKMLESAPPQLLPKK) is disordered. The segment at 80–282 (VVGGVFLPGA…RLTCVCYYRA (203 aa)) is thymine dioxygenase. Fe cation-binding residues include His-207, Asp-209, and His-257. Arg-273 is a 2-oxoglutarate binding site. The interval 409–578 (LGGALKAAEE…IEEARRRGSS (170 aa)) is DNA-binding JBP1 domain.

It belongs to the TET family. JBP1 subfamily. In terms of assembly, monomer. Binds to DNA as a monomer. Fe(2+) serves as cofactor.

Its subcellular location is the nucleus. The catalysed reaction is thymine + 2-oxoglutarate + O2 = 5-hydroxymethyluracil + succinate + CO2. Functionally, dioxygenase that catalyzes the first step of DNA base J (beta-d-glucosyl-HOMedU) biosynthesis by converting thymine to 5-hydroxymethyluracil (HOMedU). DNA base J is a hypermodified thymidine residue found in the genome of kinetoplastid parasites, which is localized primarily to repetitive DNA, namely the telomeres, and is implicated in the regulation of antigenic variation. Also specifically binds to base J-containing DNA (J-DNA). Involved in propagation and maintenance of DNA base J synthesis initiated by JBP2 by specifically binding already synthesized DNA base J and propagating J synthesis. Thymine dioxygenase activity and J-DNA-binding are independent functions. The sequence is that of Thymine dioxygenase JBP1-A (JBP1A) from Trypanosoma cruzi (strain CL Brener).